The chain runs to 343 residues: 4-hydroxy-2-oxovalerate aldolase (343 aa).

The Pyruvate carboxyltransferase domain maps to 5–256; it reads ILLCDPTLRD…ETGIDLYKIL (252 aa). 13–14 serves as a coordination point for substrate; the sequence is RD. D14 lines the Mn(2+) pocket. H17 acts as the Proton acceptor in catalysis. 2 residues coordinate substrate: S168 and H195. Mn(2+) is bound by residues H195 and H197.

It belongs to the 4-hydroxy-2-oxovalerate aldolase family. Interacts with MhpF.

It catalyses the reaction (S)-4-hydroxy-2-oxopentanoate = acetaldehyde + pyruvate. The protein operates within aromatic compound metabolism; 3-phenylpropanoate degradation. In terms of biological role, catalyzes the retro-aldol cleavage of 4-hydroxy-2-oxopentanoate to pyruvate and acetaldehyde. Is involved in the meta-cleavage pathway for the degradation of aromatic compounds. This Pectobacterium atrosepticum (strain SCRI 1043 / ATCC BAA-672) (Erwinia carotovora subsp. atroseptica) protein is 4-hydroxy-2-oxovalerate aldolase.